Reading from the N-terminus, the 325-residue chain is Elongation factor P--(R)-beta-lysine ligase (325 aa).

Position 76 to 78 (76 to 78 (SPE)) interacts with substrate. ATP is bound by residues 100 to 102 (RNE) and asparagine 109. Residue tyrosine 118 coordinates substrate. Residue 244-245 (EL) participates in ATP binding. Glutamate 251 contacts substrate. Residue glycine 300 participates in ATP binding.

It belongs to the class-II aminoacyl-tRNA synthetase family. EpmA subfamily. In terms of assembly, homodimer.

It carries out the reaction D-beta-lysine + L-lysyl-[protein] + ATP = N(6)-((3R)-3,6-diaminohexanoyl)-L-lysyl-[protein] + AMP + diphosphate + H(+). Functionally, with EpmB is involved in the beta-lysylation step of the post-translational modification of translation elongation factor P (EF-P). Catalyzes the ATP-dependent activation of (R)-beta-lysine produced by EpmB, forming a lysyl-adenylate, from which the beta-lysyl moiety is then transferred to the epsilon-amino group of a conserved specific lysine residue in EF-P. The polypeptide is Elongation factor P--(R)-beta-lysine ligase (Yersinia pseudotuberculosis serotype O:1b (strain IP 31758)).